Here is a 299-residue protein sequence, read N- to C-terminus: 4-hydroxy-tetrahydrodipicolinate synthase (299 aa).

Position 45 (Thr45) interacts with pyruvate. The active-site Proton donor/acceptor is Tyr133. Lys161 functions as the Schiff-base intermediate with substrate in the catalytic mechanism. Ile203 is a pyruvate binding site.

This sequence belongs to the DapA family. In terms of assembly, homotetramer; dimer of dimers.

It is found in the cytoplasm. The catalysed reaction is L-aspartate 4-semialdehyde + pyruvate = (2S,4S)-4-hydroxy-2,3,4,5-tetrahydrodipicolinate + H2O + H(+). It participates in amino-acid biosynthesis; L-lysine biosynthesis via DAP pathway; (S)-tetrahydrodipicolinate from L-aspartate: step 3/4. Its function is as follows. Catalyzes the condensation of (S)-aspartate-beta-semialdehyde [(S)-ASA] and pyruvate to 4-hydroxy-tetrahydrodipicolinate (HTPA). The protein is 4-hydroxy-tetrahydrodipicolinate synthase of Blochmanniella pennsylvanica (strain BPEN).